A 381-amino-acid polypeptide reads, in one-letter code: Heme A synthase (381 aa).

A run of 5 helical transmembrane segments spans residues 25–45, 112–132, 138–158, 176–196, and 212–232; these read GAVR…VAVG, LLGR…WWRG, LLLG…IGWI, LALH…LAAG, and VAGL…LVAG. His-277 contributes to the heme binding site. The next 3 membrane-spanning stretches (helical) occupy residues 279 to 299, 307 to 327, and 329 to 349; these read LFAY…VRMA, AMGV…TLLL, and VPLW…IMAT. A heme-binding site is contributed by His-337.

This sequence belongs to the COX15/CtaA family. Type 2 subfamily. In terms of assembly, interacts with CtaB. Heme b serves as cofactor.

The protein resides in the cell membrane. It catalyses the reaction Fe(II)-heme o + 2 A + H2O = Fe(II)-heme a + 2 AH2. Its pathway is porphyrin-containing compound metabolism; heme A biosynthesis; heme A from heme O: step 1/1. Its function is as follows. Catalyzes the conversion of heme O to heme A by two successive hydroxylations of the methyl group at C8. The first hydroxylation forms heme I, the second hydroxylation results in an unstable dihydroxymethyl group, which spontaneously dehydrates, resulting in the formyl group of heme A. The sequence is that of Heme A synthase from Methylorubrum populi (strain ATCC BAA-705 / NCIMB 13946 / BJ001) (Methylobacterium populi).